The primary structure comprises 428 residues: Histidine--tRNA ligase (428 aa).

Belongs to the class-II aminoacyl-tRNA synthetase family. Homodimer.

The protein resides in the cytoplasm. It catalyses the reaction tRNA(His) + L-histidine + ATP = L-histidyl-tRNA(His) + AMP + diphosphate + H(+). The sequence is that of Histidine--tRNA ligase from Lactobacillus delbrueckii subsp. bulgaricus (strain ATCC 11842 / DSM 20081 / BCRC 10696 / JCM 1002 / NBRC 13953 / NCIMB 11778 / NCTC 12712 / WDCM 00102 / Lb 14).